The chain runs to 707 residues: UvrABC system protein C (707 aa).

One can recognise a GIY-YIG domain in the interval 14–94; that stretch reads AEPGCYLMKD…IKKHRPRFNV (81 aa). The region spanning 206–241 is the UVR domain; that stretch reads GELVERLRGRMAGAAEGLRFEEAARLRDQLQAVERS. Residues 654–684 are disordered; sequence PDAPPAAADEPSGAPEGTPAGGPAEAIPDAA. The segment covering 658-684 has biased composition (low complexity); that stretch reads PAAADEPSGAPEGTPAGGPAEAIPDAA.

This sequence belongs to the UvrC family. In terms of assembly, interacts with UvrB in an incision complex.

It is found in the cytoplasm. Its function is as follows. The UvrABC repair system catalyzes the recognition and processing of DNA lesions. UvrC both incises the 5' and 3' sides of the lesion. The N-terminal half is responsible for the 3' incision and the C-terminal half is responsible for the 5' incision. The polypeptide is UvrABC system protein C (Anaeromyxobacter dehalogenans (strain 2CP-C)).